The chain runs to 370 residues: Phosphate acyltransferase (370 aa).

It belongs to the PlsX family. Homodimer. Probably interacts with PlsY.

The protein localises to the cytoplasm. The catalysed reaction is a fatty acyl-[ACP] + phosphate = an acyl phosphate + holo-[ACP]. Its pathway is lipid metabolism; phospholipid metabolism. In terms of biological role, catalyzes the reversible formation of acyl-phosphate (acyl-PO(4)) from acyl-[acyl-carrier-protein] (acyl-ACP). This enzyme utilizes acyl-ACP as fatty acyl donor, but not acyl-CoA. The polypeptide is Phosphate acyltransferase (Polaromonas naphthalenivorans (strain CJ2)).